The following is a 549-amino-acid chain: Oxygen-dependent choline dehydrogenase (549 aa).

4 to 33 is a binding site for FAD; the sequence is DFVIIGSGSAGSALAYRLSEDGKNSVLVIE. The active-site Proton acceptor is H465.

It belongs to the GMC oxidoreductase family. Requires FAD as cofactor.

It carries out the reaction choline + A = betaine aldehyde + AH2. It catalyses the reaction betaine aldehyde + NAD(+) + H2O = glycine betaine + NADH + 2 H(+). It participates in amine and polyamine biosynthesis; betaine biosynthesis via choline pathway; betaine aldehyde from choline (cytochrome c reductase route): step 1/1. Involved in the biosynthesis of the osmoprotectant glycine betaine. Catalyzes the oxidation of choline to betaine aldehyde and betaine aldehyde to glycine betaine at the same rate. The chain is Oxygen-dependent choline dehydrogenase from Rhizobium etli (strain CIAT 652).